A 238-amino-acid polypeptide reads, in one-letter code: MRIDQRALDQLREVKITRNYTRYAEGSVLVEFGHTKVLCTASIDNSVPRFLKGQGQGWVTAEYGMLPRSTHSRCDREAARGKQTGRTQEIQRLIGRSLRAMVDLKKLGENTITIDCDVIQADGGTRTASITGAAVALVDAMNVLLAQKKIKQDPLKGLVAAISVGMYQDEVLLDLCYEEDSNCQTDLNVVMTQAGEFIEIQGTAEDKPFTRAQSNAMLEMAEKGIAELIKKQQEALGW.

Phosphate-binding positions include Arg86 and 124-126; that span reads GTR.

The protein belongs to the RNase PH family. As to quaternary structure, homohexameric ring arranged as a trimer of dimers.

It catalyses the reaction tRNA(n+1) + phosphate = tRNA(n) + a ribonucleoside 5'-diphosphate. Phosphorolytic 3'-5' exoribonuclease that plays an important role in tRNA 3'-end maturation. Removes nucleotide residues following the 3'-CCA terminus of tRNAs; can also add nucleotides to the ends of RNA molecules by using nucleoside diphosphates as substrates, but this may not be physiologically important. Probably plays a role in initiation of 16S rRNA degradation (leading to ribosome degradation) during starvation. The protein is Ribonuclease PH of Acinetobacter baumannii (strain AB307-0294).